The chain runs to 174 residues: Alkyl hydroperoxide reductase AhpD (174 aa).

C130 acts as the Proton donor in catalysis. A disulfide bridge links C130 with C133. C133 functions as the Cysteine sulfenic acid (-SOH) intermediate in the catalytic mechanism.

It belongs to the AhpD family. As to quaternary structure, homotrimer.

It carries out the reaction N(6)-[(R)-dihydrolipoyl]-L-lysyl-[lipoyl-carrier protein] + a hydroperoxide = N(6)-[(R)-lipoyl]-L-lysyl-[lipoyl-carrier protein] + an alcohol + H2O. Its function is as follows. Antioxidant protein with alkyl hydroperoxidase activity. Required for the reduction of the AhpC active site cysteine residues and for the regeneration of the AhpC enzyme activity. The chain is Alkyl hydroperoxide reductase AhpD from Corynebacterium kroppenstedtii (strain DSM 44385 / JCM 11950 / CIP 105744 / CCUG 35717).